The following is a 990-amino-acid chain: Glycine dehydrogenase (decarboxylating) (990 aa).

Lys-726 is subject to N6-(pyridoxal phosphate)lysine.

The protein belongs to the GcvP family. The glycine cleavage system is composed of four proteins: P, T, L and H. Requires pyridoxal 5'-phosphate as cofactor.

The catalysed reaction is N(6)-[(R)-lipoyl]-L-lysyl-[glycine-cleavage complex H protein] + glycine + H(+) = N(6)-[(R)-S(8)-aminomethyldihydrolipoyl]-L-lysyl-[glycine-cleavage complex H protein] + CO2. Functionally, the glycine cleavage system catalyzes the degradation of glycine. The P protein binds the alpha-amino group of glycine through its pyridoxal phosphate cofactor; CO(2) is released and the remaining methylamine moiety is then transferred to the lipoamide cofactor of the H protein. This is Glycine dehydrogenase (decarboxylating) from Rhodopseudomonas palustris (strain ATCC BAA-98 / CGA009).